The chain runs to 104 residues: UPF0213 protein ORF82 (104 aa).

Residues Lys7–Leu83 form the GIY-YIG domain.

It belongs to the UPF0213 family.

This Orgyia pseudotsugata (Douglas-fir tussock moth) protein is UPF0213 protein ORF82.